We begin with the raw amino-acid sequence, 631 residues long: Shootin-1 (631 aa).

Residue Met1 is modified to N-acetylmethionine. A phosphoserine mark is found at Ser3 and Ser4. Positions Glu7–Pro353 form a coiled coil. Ser101 is modified (phosphoserine; by PAK1). A Phosphoserine modification is found at Ser249. The interval Lys343–Gly511 is disordered. Pro residues predominate over residues Val352–Pro369. Ser375 carries the post-translational modification Phosphoserine. The segment covering Thr403–Lys418 has biased composition (basic and acidic residues). Positions Leu456–Leu465 are enriched in polar residues. Ser473 bears the Phosphoserine mark. Thr487 is modified (phosphothreonine). Residues Ala490 to Lys505 show a composition bias toward polar residues. Ser494 carries the post-translational modification Phosphoserine. Thr496 bears the Phosphothreonine mark. Phosphoserine occurs at positions 506, 515, 532, and 534. Disordered regions lie at residues Lys524 to Arg566 and Val579 to Cys631. Thr537 carries the post-translational modification Phosphothreonine. The span at Cys550–Ser561 shows a compositional bias: polar residues. A compositionally biased stretch (basic and acidic residues) spans Pro590 to Cys631.

It belongs to the shootin family. In terms of assembly, interacts with L1CAM; this interaction occurs in axonal growth cones. Interacts with actin filament retrograde flow; this interaction is enhanced in a netrin-1- and PAK1-dependent manner and promotes F-actin-substrate coupling and concomitant formation of traction forces at axonal growth cones. Interacts with RUFY3. Interacts with PFN2. Interacts (via N-terminus) with KIF20B; this interaction is direct and promotes the association of SHTN1 to microtubules in primary neurons. Associates with microtubule. In terms of processing, phosphorylated on Ser-101 and Ser-249 by PAK1 through a CDC42- and RAC1-dependent signaling pathway, which enhances its association with F-actin retrograde flow in filopodia and lamellipodia of axonal growth cones. Phosphorylation on Ser-101 and Ser-249 is increased by netrin-1.

It is found in the perikaryon. The protein localises to the cell projection. The protein resides in the axon. Its subcellular location is the growth cone. It localises to the cytoplasm. It is found in the cytoskeleton. The protein localises to the filopodium. The protein resides in the lamellipodium. Functionally, involved in the generation of internal asymmetric signals required for neuronal polarization and neurite outgrowth. Mediates netrin-1-induced F-actin-substrate coupling or 'clutch engagement' within the axon growth cone through activation of CDC42, RAC1 and PAK1-dependent signaling pathway, thereby converting the F-actin retrograde flow into traction forces, concomitantly with filopodium extension and axon outgrowth. Plays a role in cytoskeletal organization by regulating the subcellular localization of phosphoinositide 3-kinase (PI3K) activity at the axonal growth cone. Also plays a role in regenerative neurite outgrowth. In the developing cortex, cooperates with KIF20B to promote both the transition from the multipolar to the bipolar stage and the radial migration of cortical neurons from the ventricular zone toward the superficial layer of the neocortex. Involved in the accumulation of phosphatidylinositol 3,4,5-trisphosphate (PIP3) in the growth cone of primary hippocampal neurons. The sequence is that of Shootin-1 from Homo sapiens (Human).